A 204-amino-acid chain; its full sequence is Large ribosomal subunit protein eL15 (204 aa).

Disordered regions lie at residues 71 to 91 (RKRP…GVNQ) and 159 to 182 (REMR…HYSQ). The segment covering 159–174 (REMRGKTSAGRKHRGL) has biased composition (basic residues).

It belongs to the eukaryotic ribosomal protein eL15 family.

The chain is Large ribosomal subunit protein eL15 (RPL15) from Faxonius limosus (Spinycheek crayfish).